Reading from the N-terminus, the 141-residue chain is Protein X (141 aa).

The tract at residues 22 to 52 (GPQSSGPPFPRPAAGSAASSASSPSPSDESD) is disordered. A compositionally biased stretch (low complexity) spans 33–48 (PAAGSAASSASSPSPS). A mitochondrial targeting sequence region spans residues 68–113 (PCCLVFTCADLRTMDSTVNFVSWHAKRQLGMPSKDLWTPYIKDQLL).

It belongs to the orthohepadnavirus protein X family. As to quaternary structure, may form homodimer. May interact with host CEBPA, CFLAR, CREB1, DDB1, E4F1, HBXIP, HSPD1/HSP60, NFKBIA, POLR2E and SMAD4. Interacts with host SMC5-SMC6 complex and induces its degradation. Interacts with host TRPC4AP; leading to prevent ubiquitination of TRPC4AP. Interacts with host PLSCR1; this interaction promotes ubiquitination and degradation of HBx and impairs HBx-mediated cell proliferation. In terms of processing, a fraction may be phosphorylated in insect cells and HepG2 cells, a human hepatoblastoma cell line. Phosphorylated in vitro by host protein kinase C or mitogen-activated protein kinase. N-acetylated in insect cells.

It is found in the host cytoplasm. The protein resides in the host nucleus. It localises to the host mitochondrion. Multifunctional protein that plays a role in silencing host antiviral defenses and promoting viral transcription. Does not seem to be essential for HBV infection. May be directly involved in development of cirrhosis and liver cancer (hepatocellular carcinoma). Most of cytosolic activities involve modulation of cytosolic calcium. The effect on apoptosis is controversial depending on the cell types in which the studies have been conducted. May induce apoptosis by localizing in mitochondria and causing loss of mitochondrial membrane potential. May also modulate apoptosis by binding host CFLAR, a key regulator of the death-inducing signaling complex (DISC). Promotes viral transcription by using the host E3 ubiquitin ligase DDB1 to target the SMC5-SMC6 complex to proteasomal degradation. This host complex would otherwise bind to viral episomal DNA, and prevents its transcription. Moderately stimulates transcription of many different viral and cellular transcription elements. Promoters and enhancers stimulated by HBx contain DNA binding sites for NF-kappa-B, AP-1, AP-2, c-EBP, ATF/CREB, or the calcium-activated factor NF-AT. The protein is Protein X of Woodchuck hepatitis B virus (isolate w64/pWS23) (WHV).